The chain runs to 723 residues: Probable G-protein coupled receptor 149 (723 aa).

Residues 1 to 31 (MSVMPSNLSLNGTSFFAENHSIMDKPNEQRT) are Extracellular-facing. N-linked (GlcNAc...) asparagine glycans are attached at residues Asn7, Asn11, and Asn19. The chain crosses the membrane as a helical span at residues 32–52 (LNVFLFCSTFIIAFTVLLGSI). At 53-69 (YSLVSLLKLQNKSTISM) the chain is on the cytoplasmic side. The chain crosses the membrane as a helical span at residues 70–90 (IVTSLSIDDLISIVPVIIFML). The Extracellular segment spans residues 91–106 (TQWSSDALPQPLCTTS). Cys103 and Cys181 are oxidised to a cystine. The chain crosses the membrane as a helical span at residues 107–127 (ALIYLFQGISSNLKGSLIVSY). Residues 128-148 (NFYSINKTETMNCSASKRRVS) lie on the Cytoplasmic side of the membrane. The helical transmembrane segment at 149–169 (MVWAILSIWIVSLLICILPLC) threads the bilayer. Over 170–188 (GWGKYIPTTWGCFTDHASS) the chain is Extracellular. A helical transmembrane segment spans residues 189-209 (YILFLFIVYSLCFCLLTVLSV). The Cytoplasmic segment spans residues 210 to 306 (PLTYQLLCSD…SFTVGFAQKR (97 aa)). The chain crosses the membrane as a helical span at residues 307–327 (FSLILALTKVILWLPMMIQMV). Residues 328–338 (VQHITGYQSFS) lie on the Extracellular side of the membrane. A helical transmembrane segment spans residues 339–359 (FETLSFLLTLLAATVTPVFVL). The Cytoplasmic portion of the chain corresponds to 360–723 (SEHWIHLPCG…RKREEDGNSN (364 aa)). The segment at 451-513 (TTDSARPGPA…ERRLSHEEGH (63 aa)) is disordered. Positions 501 to 513 (EGPERRLSHEEGH) are enriched in basic and acidic residues.

The protein belongs to the G-protein coupled receptor 1 family. Specific expression in peripheral nervous system, including nerve growth factor-dependent sensory and sympathetic neurons, as well as enteric neurons.

The protein localises to the cell membrane. In terms of biological role, orphan receptor. The polypeptide is Probable G-protein coupled receptor 149 (GPR149) (Gallus gallus (Chicken)).